The chain runs to 155 residues: uncharacterized protein (155 aa).

Residues Met1–Ala23 form the signal peptide. A disulfide bridge links Cys86 with Cys91.

This sequence belongs to the ivy family.

It is found in the periplasm. This is an uncharacterized protein from Pseudomonas aeruginosa (strain ATCC 15692 / DSM 22644 / CIP 104116 / JCM 14847 / LMG 12228 / 1C / PRS 101 / PAO1).